Here is a 116-residue protein sequence, read N- to C-terminus: Translation initiation factor 1A (116 aa).

The disordered stretch occupies residues 1-25; it reads MRCLSKKHQKQGDEHGGEIPLPNPD. The 75-residue stretch at 17-91 folds into the S1-like domain; it reads GEIPLPNPDE…EKGEVVYKYG (75 aa).

Belongs to the eIF-1A family.

Its function is as follows. Seems to be required for maximal rate of protein biosynthesis. Enhances ribosome dissociation into subunits and stabilizes the binding of the initiator Met-tRNA(I) to 40 S ribosomal subunits. This is Translation initiation factor 1A (eIF1A) from Desulfurococcus amylolyticus (strain DSM 18924 / JCM 16383 / VKM B-2413 / 1221n) (Desulfurococcus kamchatkensis).